The following is a 316-amino-acid chain: Cytochrome c biogenesis protein CcsA (316 aa).

Helical transmembrane passes span 9–29 (IFVNISFVMFFFVTLLNLINL), 39–61 (FSKNSMTIAFFCTTGFLITRYLQ), 70–90 (LYESLMFLSWGFSLLYLILEV), 94–114 (IGLSHAVLAPGAMLIHAFATL), 143–163 (LISYITLLCGSLLAITLLSLF), 224–244 (TISLGFSLLTIGILSGAVWAN), 257–271 (ETWALVTWLVYAIYL), and 289–309 (SMGFFLVWICFLGVNLLGVGL).

Belongs to the CcmF/CycK/Ccl1/NrfE/CcsA family. As to quaternary structure, may interact with Ccs1.

The protein resides in the plastid. The protein localises to the chloroplast thylakoid membrane. Functionally, required during biogenesis of c-type cytochromes (cytochrome c6 and cytochrome f) at the step of heme attachment. This Adiantum capillus-veneris (Maidenhair fern) protein is Cytochrome c biogenesis protein CcsA.